The following is a 124-amino-acid chain: UPF0231 protein Shewana3_0655 (124 aa).

This sequence belongs to the UPF0231 family.

The protein is UPF0231 protein Shewana3_0655 of Shewanella sp. (strain ANA-3).